The sequence spans 324 residues: MAKGIVHYEVGEQVDVYLLIKSVTKGIASNGKPFLTLILQDKTGDIEAKLWDVSPEDESVYVPESIVKVLGDIHNYRGKMQLKIRSIRLAHEGDAVRVSDFLETAPMKREDMMEKITEYIFAMQNPNIQRITRYLLKKYEQKFFDYPAATKNHHEFISGLAYHVVSMLELAKALVNLYPSLNRDLLYAGVILHDLGKVIELSGPVSASYTLEGKLLGHIPIMVGEISKAAEHLGISGEEIVVLQHMVLSHHGKAEWGSPKPPMVKEAEILHYIDNLDAKMNMIDRALEKVKPGEFTERIYALENRSFYKPIFSSVLMQERGGTS.

The HD domain occupies 163–279 (HVVSMLELAK…LHYIDNLDAK (117 aa)).

This sequence belongs to the YhaM family.

Shows a 3'-5' exoribonuclease activity. The chain is 3'-5' exoribonuclease YhaM from Geobacillus sp. (strain WCH70).